The following is a 278-amino-acid chain: Octanoyl-[GcvH]:protein N-octanoyltransferase (278 aa).

A BPL/LPL catalytic domain is found at 41–247 (LVSPPTIRTW…LLHRLAGEVH (207 aa)). Cysteine 146 serves as the catalytic Acyl-thioester intermediate.

The protein belongs to the octanoyltransferase LipL family.

It carries out the reaction N(6)-octanoyl-L-lysyl-[glycine-cleavage complex H protein] + L-lysyl-[lipoyl-carrier protein] = N(6)-octanoyl-L-lysyl-[lipoyl-carrier protein] + L-lysyl-[glycine-cleavage complex H protein]. The protein operates within protein modification; protein lipoylation via endogenous pathway; protein N(6)-(lipoyl)lysine from octanoyl-[acyl-carrier-protein]. In terms of biological role, catalyzes the amidotransfer (transamidation) of the octanoyl moiety from octanoyl-GcvH to the lipoyl domain of the E2 subunit of lipoate-dependent enzymes. In Lysinibacillus sphaericus (strain C3-41), this protein is Octanoyl-[GcvH]:protein N-octanoyltransferase.